Here is a 643-residue protein sequence, read N- to C-terminus: 1-deoxy-D-xylulose-5-phosphate synthase (643 aa).

Thiamine diphosphate is bound by residues histidine 72 and 113–115; that span reads GHA. Aspartate 144 is a binding site for Mg(2+). Thiamine diphosphate contacts are provided by residues 145-146, asparagine 174, tyrosine 287, and glutamate 370; that span reads GA. Asparagine 174 provides a ligand contact to Mg(2+).

Belongs to the transketolase family. DXPS subfamily. In terms of assembly, homodimer. Mg(2+) is required as a cofactor. Thiamine diphosphate serves as cofactor.

It catalyses the reaction D-glyceraldehyde 3-phosphate + pyruvate + H(+) = 1-deoxy-D-xylulose 5-phosphate + CO2. It participates in metabolic intermediate biosynthesis; 1-deoxy-D-xylulose 5-phosphate biosynthesis; 1-deoxy-D-xylulose 5-phosphate from D-glyceraldehyde 3-phosphate and pyruvate: step 1/1. In terms of biological role, catalyzes the acyloin condensation reaction between C atoms 2 and 3 of pyruvate and glyceraldehyde 3-phosphate to yield 1-deoxy-D-xylulose-5-phosphate (DXP). This Parasynechococcus marenigrum (strain WH8102) protein is 1-deoxy-D-xylulose-5-phosphate synthase.